The following is a 402-amino-acid chain: Queuine tRNA-ribosyltransferase-like protein (402 aa).

This sequence belongs to the queuine tRNA-ribosyltransferase family.

The protein is Queuine tRNA-ribosyltransferase-like protein of Theileria annulata.